We begin with the raw amino-acid sequence, 450 residues long: UDP-N-acetylmuramoylalanine--D-glutamate ligase (450 aa).

119-125 serves as a coordination point for ATP; it reads GSNGKTT.

Belongs to the MurCDEF family.

It localises to the cytoplasm. The catalysed reaction is UDP-N-acetyl-alpha-D-muramoyl-L-alanine + D-glutamate + ATP = UDP-N-acetyl-alpha-D-muramoyl-L-alanyl-D-glutamate + ADP + phosphate + H(+). It participates in cell wall biogenesis; peptidoglycan biosynthesis. Cell wall formation. Catalyzes the addition of glutamate to the nucleotide precursor UDP-N-acetylmuramoyl-L-alanine (UMA). The polypeptide is UDP-N-acetylmuramoylalanine--D-glutamate ligase (Streptococcus pneumoniae serotype 19F (strain G54)).